Consider the following 529-residue polypeptide: Neuronal acetylcholine receptor subunit alpha-2 (529 aa).

Positions 1–26 are cleaved as a signal peptide; the sequence is MGPSCPVFLSFTKLSLWWLLLTPAGG. The tract at residues 27 to 56 is disordered; it reads EEAKRPPPRAPGDPLSSPSPTALPQGGSHT. Residues 27 to 264 are Extracellular-facing; the sequence is EEAKRPPPRA…VTYAFVIRRL (238 aa). Residues Asn79 and Asn129 are each glycosylated (N-linked (GlcNAc...) asparagine). Cys183 and Cys197 are disulfide-bonded. Residue Asn235 is glycosylated (N-linked (GlcNAc...) asparagine). Cysteines 247 and 248 form a disulfide. The next 3 membrane-spanning stretches (helical) occupy residues 265-289, 297-315, and 331-352; these read PLFY…VFYL, ITLC…LLIT, and YLLF…VLNV. Topologically, residues 353–502 are cytoplasmic; that stretch reads HHRSPSTHTM…WKYVAMVIDR (150 aa). The chain crosses the membrane as a helical span at residues 503–521; it reads IFLWLFIIVCFLGTIGLFL.

This sequence belongs to the ligand-gated ion channel (TC 1.A.9) family. Acetylcholine receptor (TC 1.A.9.1) subfamily. Alpha-2/CHRNA2 sub-subfamily. As to quaternary structure, neuronal AChR is composed of two different types of subunits: alpha and non-alpha (beta). CHRNA2/alpha-2 subunit can be combined to CHRNB2/beta-2 or CHRNB4/beta-4 to give rise to functional receptors. Both CHRNA2:CHRNB2 and CHRNA2:CHRNB4 nAChR complexes are heteropentamers with two subtypes: LS (low agonist sensitivity) with a (CHRNA2)3:(CHRNB2/4)2 and HS (high agonist sensitivity) with a (CHRNA2)2:(CHRNB2/4)3 stoichiometries; the subtypes differ in their subunit binding interfaces which are involved in ligand binding.

Its subcellular location is the synaptic cell membrane. The protein resides in the cell membrane. It catalyses the reaction Ca(2+)(in) = Ca(2+)(out). The enzyme catalyses K(+)(in) = K(+)(out). The catalysed reaction is Na(+)(in) = Na(+)(out). Functionally, component of neuronal acetylcholine receptors (nAChRs) that function as pentameric, ligand-gated cation channels with high calcium permeability among other activities. nAChRs are excitatory neurotrasnmitter receptors formed by a collection of nAChR subunits known to mediate synaptic transmission in the nervous system and the neuromuscular junction. Each nAchR subunit confers differential attributes to channel properties, including activation, deactivation and desensitization kinetics, pH sensitivity, cation permeability, and binding to allosteric modulators. CHRNA2 forms heteropentameric neuronal acetylcholine receptors with CHRNB2 and CHRNB4 and plays a role in nicotine dependence. The polypeptide is Neuronal acetylcholine receptor subunit alpha-2 (Homo sapiens (Human)).